Reading from the N-terminus, the 1356-residue chain is MGSEAAAAARAVVVAVNGERYEAVGVDPSTTLLEFLRTRTPVRGPKLGCGEGGCGACVVVVSKYDAVADEVTEFSASSCLTLLGSLHHCAVTTSEGIGNSRDGFHAVQRRLSGFHASQCGFCTPGMCMSIYSALAKADKASGRPAPPTGFSKITAAEAEKAVSGNLCRCTGYRPIVDACKSFAADVDLEDLGLNAFWKKGVDDEHADINKLPAYSGGAAVCTFPEFLKSEIRSSMGQANGDTSAVVVTGDGWFHPKSVEEFHRLFDSNLFDERSVKIVASNTGSGVYKDQDLHDKYINISQIPELSAINRSSKGVEIGAVVSISQAIDILSDGGAVFRKIADHLSKVASPFVRNTATIGGNIIMAQRLSFSSDIATVLLAAGSTVTIQVAAKRMCITLEEFLKQPPCDSRTLLVSISIPDWGSDDGITFQTFRAAPRPLGNAVSYVNSAFLARSSVDGSSGSHLIEDVCLAFGPFGAKHAIRAREVEKFLKGKLVSAPVILEAVRLLKGVVSPAEGTTHPEYRVSLAVSYLFKFLSSLTNGLDEPENANVPNGSFTNGTANGIVDSSPEKHSNVDSSYLPIKSRQEMVFSDEYRPIGKPIEKTGAELQASGEAVYVDDISAPKDCLYGAFIYSTHPHAHIKGVNFRSSLASQKVITVITLKDIPTNGKNIGSCSPMLGDEALFVDPVSEFAGQNIGVVIAETQKYAYMAAKQSVIEYSTENLQPPILTVEDAVQHNSYFQVPPFLAPTPIGEFNQAMSEADHKIIDGEVKLESQYYFYMETQTALAIPDEDNCITLYVSAQLPEITQNTVARCLGIPYHNVRIITRRVGGGFGGKAMKAIHVATACAVAAFKLRRPVRMYLDRKTDMIMAGGRHPMKVKYSVGFKSDGKITGLHVDLRINCGISPDCSPALPVAIVGALKKYNWGALSFDIKLCKTNVSSKSAMRAPGDAQGSFIAEAIVEHIASTLSVDTNAIRRKNLHDFESLKVFYGNSAGDPSTYSLVTIFDKLASSPEYQQRAAVVEHFNAGSRWKKRGISCVPITYDVRLRPSPGKVSIMNDGSIAVEVGGVEIGQGLWTKVKQMTAFALGQLCDDGGEGLLDKVRVIQADTLSMIQGGFTGGSTTSETSCEAVRKSCAALVERLKPIKEKAGTLPWKSLIAQASMASVKLTEHAYWTPDPTFTSYLNYGAAISEVEVDVLTGETTILRSDLVYDCGQSLNPAVDLGQVEGAFVQGIGFFTNEEYTTNSDGLVINDGTWTYKIPTVDTIPKQFNVELINSARDHKRVLSSKASGEPPLLLASSVHCAMREAIRAARKEFAGAGGSSLTFQMDVPATMPIVKELCGLDVVERDLESFAAKA.

In terms of domain architecture, 2Fe-2S ferredoxin-type spans 10-97 (RAVVVAVNGE…HCAVTTSEGI (88 aa)). Cys49, Cys54, Cys57, and Cys79 together coordinate [2Fe-2S] cluster. An FAD-binding PCMH-type domain is found at 245 to 437 (VVVTGDGWFH…TFQTFRAAPR (193 aa)). The segment at 552–576 (NGSFTNGTANGIVDSSPEKHSNVDS) is disordered.

The protein belongs to the xanthine dehydrogenase family. Aldehyde oxidases (AO) are homodimers and heterodimers of AO subunits. Requires [2Fe-2S] cluster as cofactor. FAD is required as a cofactor. It depends on Mo-molybdopterin as a cofactor.

The enzyme catalyses an aldehyde + O2 + H2O = a carboxylate + H2O2 + H(+). This chain is Probable aldehyde oxidase 3, found in Oryza sativa subsp. japonica (Rice).